The sequence spans 121 residues: Basic phospholipase A2 (121 aa).

Disulfide bonds link cysteine 26/cysteine 114, cysteine 28/cysteine 44, cysteine 43/cysteine 94, cysteine 49/cysteine 121, cysteine 50/cysteine 87, cysteine 57/cysteine 80, and cysteine 74/cysteine 85. Positions 27, 29, and 31 each coordinate Ca(2+). The active site involves histidine 47. Aspartate 48 provides a ligand contact to Ca(2+). The active site involves aspartate 88.

As to quaternary structure, homopentamer. Requires Ca(2+) as cofactor. As to expression, expressed by the venom gland.

The protein resides in the secreted. The enzyme catalyses a 1,2-diacyl-sn-glycero-3-phosphocholine + H2O = a 1-acyl-sn-glycero-3-phosphocholine + a fatty acid + H(+). In terms of biological role, snake venom phospholipase A2 (PLA2) that displays moderate myotoxic activity in vivo, and cytotoxic activity in vitro. In vitro, shows anticoagulant activity on human plasma and in mice causes inflammatory cell infiltration and myonecrosis in the gastrocnemius muscles of CD-1 mice 3 hours after injection (100 ug). PLA2 catalyzes the calcium-dependent hydrolysis of the 2-acyl groups in 3-sn-phosphoglycerides. This chain is Basic phospholipase A2, found in Porthidium ophryomegas (Slender hognose viper).